A 200-amino-acid polypeptide reads, in one-letter code: Rho-related protein racD (200 aa).

GTP contacts are provided by Ala20, Gly22, Lys23, Thr24, Cys25, Tyr39, and Thr42. Residue Thr24 participates in Mg(2+) binding. Short sequence motifs (switch) lie at residues 33-44 (NEFPKDYVPTVF) and 64-82 (DTAG…YPNT). Residue Thr42 participates in Mg(2+) binding. Positions 123, 125, and 166 each coordinate GTP. The residue at position 197 (Cys197) is a Cysteine methyl ester. Cys197 is lipidated: S-geranylgeranyl cysteine. A propeptide spans 198–200 (ALL) (removed in mature form).

It belongs to the small GTPase superfamily. Rho family. Requires Mg(2+) as cofactor.

It localises to the cell membrane. The protein localises to the cytoplasm. The protein resides in the cytoskeleton. It catalyses the reaction GTP + H2O = GDP + phosphate + H(+). Its activity is regulated as follows. Regulated by guanine nucleotide exchange factors (GEFs) which promote the exchange of bound GDP for free GTP, GTPase activating proteins (GAPs) which increase the GTP hydrolysis activity, and GDP dissociation inhibitors which inhibit the dissociation of the nucleotide from the GTPase. Small GTPase which cycles between active GTP-bound and inactive GDP-bound states. The sequence is that of Rho-related protein racD from Entamoeba histolytica (strain ATCC 30459 / HM-1:IMSS / ABRM).